The primary structure comprises 78 residues: Large ribosomal subunit protein bL28 (78 aa).

The protein belongs to the bacterial ribosomal protein bL28 family.

In Pectobacterium carotovorum subsp. carotovorum (strain PC1), this protein is Large ribosomal subunit protein bL28.